The sequence spans 230 residues: Orotidine 5'-phosphate decarboxylase (230 aa).

Substrate contacts are provided by residues Asp-10, Lys-31, 58 to 67, Thr-117, Arg-179, Gln-188, Gly-208, and Arg-209; that span reads DLKLHDIPNT. Lys-60 (proton donor) is an active-site residue.

The protein belongs to the OMP decarboxylase family. Type 1 subfamily. In terms of assembly, homodimer.

It carries out the reaction orotidine 5'-phosphate + H(+) = UMP + CO2. It participates in pyrimidine metabolism; UMP biosynthesis via de novo pathway; UMP from orotate: step 2/2. Functionally, catalyzes the decarboxylation of orotidine 5'-monophosphate (OMP) to uridine 5'-monophosphate (UMP). This is Orotidine 5'-phosphate decarboxylase from Staphylococcus aureus (strain USA300).